A 145-amino-acid chain; its full sequence is D-aminoacyl-tRNA deacylase (145 aa).

The Gly-cisPro motif, important for rejection of L-amino acids motif lies at 137–138; the sequence is GP.

Belongs to the DTD family. As to quaternary structure, homodimer.

Its subcellular location is the cytoplasm. It catalyses the reaction glycyl-tRNA(Ala) + H2O = tRNA(Ala) + glycine + H(+). The enzyme catalyses a D-aminoacyl-tRNA + H2O = a tRNA + a D-alpha-amino acid + H(+). An aminoacyl-tRNA editing enzyme that deacylates mischarged D-aminoacyl-tRNAs. Also deacylates mischarged glycyl-tRNA(Ala), protecting cells against glycine mischarging by AlaRS. Acts via tRNA-based rather than protein-based catalysis; rejects L-amino acids rather than detecting D-amino acids in the active site. By recycling D-aminoacyl-tRNA to D-amino acids and free tRNA molecules, this enzyme counteracts the toxicity associated with the formation of D-aminoacyl-tRNA entities in vivo and helps enforce protein L-homochirality. The polypeptide is D-aminoacyl-tRNA deacylase (Shewanella oneidensis (strain ATCC 700550 / JCM 31522 / CIP 106686 / LMG 19005 / NCIMB 14063 / MR-1)).